Consider the following 431-residue polypeptide: 3-deoxy-D-manno-octulosonic acid transferase (431 aa).

A helical; Signal-anchor membrane pass occupies residues 5 to 27; the sequence is WLTSRLYDAFLVCAFFVSAPRIF. Catalysis depends on glutamate 67, which acts as the Proton acceptor. CMP is bound by residues 275–276, 315–317, and 342–345; these read PR, MGV, and NLLE.

It belongs to the glycosyltransferase group 1 family. Glycosyltransferase 30 subfamily.

Its subcellular location is the cell inner membrane. It catalyses the reaction lipid IVA (E. coli) + CMP-3-deoxy-beta-D-manno-octulosonate = alpha-Kdo-(2-&gt;6)-lipid IVA (E. coli) + CMP + H(+). It carries out the reaction alpha-Kdo-(2-&gt;6)-lipid IVA (E. coli) + CMP-3-deoxy-beta-D-manno-octulosonate = alpha-Kdo-(2-&gt;4)-alpha-Kdo-(2-&gt;6)-lipid IVA (E. coli) + CMP + H(+). The enzyme catalyses alpha-Kdo-(2-&gt;4)-alpha-Kdo-(2-&gt;6)-lipid IVA (E. coli) + CMP-3-deoxy-beta-D-manno-octulosonate = alpha-Kdo-(2-&gt;8)-alpha-Kdo-(2-&gt;4)-alpha-Kdo-(2-&gt;6)-lipid IVA (E. coli) + CMP + H(+). It participates in bacterial outer membrane biogenesis; LPS core biosynthesis. Involved in lipopolysaccharide (LPS) biosynthesis. Catalyzes the transfer of three 3-deoxy-D-manno-octulosonate (Kdo) residues from CMP-Kdo to lipid IV(A), the tetraacyldisaccharide-1,4'-bisphosphate precursor of lipid A. Thus generates the genus-specific LPS epitope of Chlamydia, composed of the trisaccharide alpha-Kdo-(2-&gt;8)-alpha-Kdo-(2-&gt;4)-alpha-Kdo. The protein is 3-deoxy-D-manno-octulosonic acid transferase (waaA) of Chlamydia trachomatis serovar A (strain ATCC VR-571B / DSM 19440 / HAR-13).